The sequence spans 424 residues: Choline-phosphate cytidylyltransferase (424 aa).

Residues 1 to 70 are disordered; that stretch reads MANPTTGKSS…RKRRRLTKEF (70 aa). Positions 14–24 are enriched in low complexity; the sequence is KLSNSSLSNLF. Ser16 bears the Phosphoserine mark. Acidic residues predominate over residues 35-44; that stretch reads ETEEQDNEDK. A compositionally biased stretch (basic and acidic residues) spans 45–55; sequence DESKNQDENKD. Thr59 bears the Phosphothreonine mark. Residues 111–119 and Lys149 contribute to the CTP site; that span reads VFDLFHLGH. Residues Lys149 and Trp178 each coordinate substrate. CTP is bound by residues 195 to 196, Tyr200, and 223 to 227; these read HD and RTNGV. Position 346 is a phosphoserine (Ser346). The segment at 348 to 424 is disordered; that stretch reads ATEFANEFTG…LTQKKKQSAN (77 aa). A compositionally biased stretch (low complexity) spans 381–398; that stretch reads NSNNTNTNSDSDSNTNST. Ser401 carries the post-translational modification Phosphoserine; by CK2.

The protein belongs to the cytidylyltransferase family.

Its subcellular location is the membrane. The catalysed reaction is phosphocholine + CTP + H(+) = CDP-choline + diphosphate. It functions in the pathway phospholipid metabolism; phosphatidylcholine biosynthesis; phosphatidylcholine from phosphocholine: step 1/2. In terms of biological role, catalyzes the key rate-limiting step in the CDP-choline pathway for phosphatidylcholine biosynthesis. This Saccharomyces cerevisiae (strain ATCC 204508 / S288c) (Baker's yeast) protein is Choline-phosphate cytidylyltransferase (PCT1).